The sequence spans 164 residues: 4-hydroxy-4-methyl-2-oxoglutarate aldolase (164 aa).

Residues 74–77 (GGNL) and Arg-96 each bind substrate. Asp-97 provides a ligand contact to a divalent metal cation.

The protein belongs to the class II aldolase/RraA-like family. As to quaternary structure, homotrimer. Ni(2+) serves as cofactor. Co(2+) is required as a cofactor. Requires Zn(2+) as cofactor.

It catalyses the reaction 4-hydroxy-4-methyl-2-oxoglutarate = 2 pyruvate. The enzyme catalyses oxaloacetate + H(+) = pyruvate + CO2. With respect to regulation, competitively inhibited by oxalate, a pyruvate enolate analog. In terms of biological role, catalyzes the aldol cleavage of 4-hydroxy-4-methyl-2-oxoglutarate (HMG) into 2 molecules of pyruvate. Also contains a secondary oxaloacetate (OAA) decarboxylase activity due to the common pyruvate enolate transition state formed following C-C bond cleavage in the retro-aldol and decarboxylation reactions. This chain is 4-hydroxy-4-methyl-2-oxoglutarate aldolase, found in Thermus thermophilus (strain ATCC 27634 / DSM 579 / HB8).